The primary structure comprises 1730 residues: Meiosis regulator and mRNA stability factor 1 (1730 aa).

Residue S65 is modified to Phosphoserine. In terms of domain architecture, NYN spans 352 to 489; sequence IGVFWDIENC…ALLHHANQLI (138 aa). The span at 655–668 shows a compositional bias: basic and acidic residues; the sequence is MESKSGNRNSDHQQ. The tract at residues 655 to 722 is disordered; it reads MESKSGNRNS…VNSPVEKKKR (68 aa). Y698 carries the post-translational modification Phosphotyrosine. Residues 781-860 form the RRM domain; the sequence is VDIQVSNVDY…KKILVSLSTG (80 aa). HTH OST-type domains are found at residues 865–939 and 993–1069; these read SLSL…SPLG and SLKV…HNKP. Phosphoserine is present on residues S1081 and S1083. HTH OST-type domains are found at residues 1089-1163, 1165-1241, 1249-1324, 1325-1400, 1401-1475, and 1476-1550; these read QLIQ…LTHR, QVKR…RKRE, RTKQ…TEVE, RFKA…INRK, SLRS…VKLT, and SLYL…LKND. The segment at 1667 to 1714 is disordered; the sequence is VQKGNLSCDSSPSSPAASPAPPGPSSEAPRPLFSKDAVESPAKKQPKN. Phosphoserine is present on S1684.

Interacts with LIMK2. In terms of tissue distribution, predominantly present in oocytes and barely detectable in granulosa cells (at protein level).

Its subcellular location is the peroxisome. Its function is as follows. Essential regulator of oogenesis required for female meiotic progression to repress transposable elements and preventing their mobilization, which is essential for the germline integrity. Probably acts via some RNA metabolic process, equivalent to the piRNA system in males, which mediates the repression of transposable elements during meiosis by forming complexes composed of RNAs and governs the methylation and subsequent repression of transposons. Also required to protect from DNA double-strand breaks. In Mus musculus (Mouse), this protein is Meiosis regulator and mRNA stability factor 1 (Marf1).